The following is a 227-amino-acid chain: Iron-regulated surface determinant protein C (227 aa).

The N-terminal stretch at 1–28 (MKNILKVFNTTILALIIIIATFSNSANA) is a signal peptide. An NEAT domain is found at 29–150 (ADSGTLNYEV…KFNGPTDVAG (122 aa)). Heme contacts are provided by Ser-47, Ile-48, Tyr-132, and Tyr-136. Positions 149 to 191 (AGANAPGKDDKNSASGSDKGSDGATTGQSESNSSNKDKVENPQ) are disordered. The span at 161-172 (SASGSDKGSDGA) shows a compositional bias: low complexity. Over residues 173 to 182 (TTGQSESNSS) the composition is skewed to polar residues. Positions 189-193 (NPQTN) match the NPQTN sorting signal motif. The residue at position 192 (Thr-192) is a Pentaglycyl murein peptidoglycan amidated threonine. Positions 193-227 (NAGTPAYIYAIPVASLALLIAITLFVRKKSKGNVE) are cleaved as a propeptide — removed by sortase B.

It belongs to the IsdC family. Monomer. Interacts with IsdA.

It localises to the secreted. It is found in the cell wall. Involved in heme (porphyrin) scavenging. Binds hemoglobin and almost exclusively free-base protoporphyrin IX. Probably has a role as the central conduit of the isd heme uptake system, i.e. mediates the transfer of the iron-containing nutrient from IsdABH to the membrane translocation system IsdDEF. Hemin-free IsdC (apo-IsdC) acquires hemin from hemin-containing IsdA (holo-IsdA) probably through the activated holo-IsdA-apo-IsdC complex and due to the higher affinity of apo-IsdC for the cofactor. The reaction is reversible. This is Iron-regulated surface determinant protein C (isdC) from Staphylococcus aureus (strain bovine RF122 / ET3-1).